The chain runs to 831 residues: Periplasmic nitrate reductase (831 aa).

The tat-type signal signal peptide spans Met-1–Ala-29. The 57-residue stretch at Ile-41–Asp-97 folds into the 4Fe-4S Mo/W bis-MGD-type domain. [4Fe-4S] cluster-binding residues include Cys-48, Cys-51, Cys-55, and Cys-83. Mo-bis(molybdopterin guanine dinucleotide)-binding positions include Lys-85, Gln-152, Asn-177, Cys-181, Trp-214–Met-221, Ser-245–His-249, Gly-264–Asp-266, Met-375, Gln-379, Asn-485, Ser-511–Asp-512, Lys-534, Asp-561, and Thr-721–Ser-730. Trp-797 contributes to the substrate binding site. Residues Asn-805 and Lys-822 each coordinate Mo-bis(molybdopterin guanine dinucleotide).

It belongs to the prokaryotic molybdopterin-containing oxidoreductase family. NasA/NapA/NarB subfamily. In terms of assembly, component of the periplasmic nitrate reductase NapAB complex composed of NapA and NapB. Requires [4Fe-4S] cluster as cofactor. Mo-bis(molybdopterin guanine dinucleotide) is required as a cofactor. Predicted to be exported by the Tat system. The position of the signal peptide cleavage has not been experimentally proven.

Its subcellular location is the periplasm. The enzyme catalyses 2 Fe(II)-[cytochrome] + nitrate + 2 H(+) = 2 Fe(III)-[cytochrome] + nitrite + H2O. Its function is as follows. Catalytic subunit of the periplasmic nitrate reductase complex NapAB. Receives electrons from NapB and catalyzes the reduction of nitrate to nitrite. The chain is Periplasmic nitrate reductase from Cereibacter sphaeroides (strain ATCC 17023 / DSM 158 / JCM 6121 / CCUG 31486 / LMG 2827 / NBRC 12203 / NCIMB 8253 / ATH 2.4.1.) (Rhodobacter sphaeroides).